We begin with the raw amino-acid sequence, 302 residues long: Heme A synthase (302 aa).

Topologically, residues 1–6 (MNKALK) are cytoplasmic. The helical transmembrane segment at 7-27 (GLGIITTIAMLFVLIGGALVT) threads the bilayer. Residues 28–61 (KTGSGMGCGRSWPLCNGSIFPALTLESIIEWSHR) are Extracellular-facing. A disulfide bond links Cys35 and Cys42. The active site involves Glu57. His60 contributes to the heme o binding site. The chain crosses the membrane as a helical span at residues 62–82 (FVSGTSGVLVLALAIWTWKKI). Residues 83–91 (GHIRETKFL) are Cytoplasmic-facing. A helical membrane pass occupies residues 92-112 (AVMSVVFLILQALLGAAAVVF). Residues 113–120 (GSSALIMA) lie on the Extracellular side of the membrane. The chain crosses the membrane as a helical span at residues 121–141 (LHFGISLISFASVLLLTLLVF). His122 is a heme o binding site. Over 142–158 (EADSKQKSESFYIGKTM) the chain is Cytoplasmic. A helical transmembrane segment spans residues 159-179 (QFHMIGIIIYTYVVVYTGAYV). Residues 180–208 (RHTSSSLACLDFPMCSTENGWLPGKFHEW) lie on the Extracellular side of the membrane. Cys188 and Cys194 are joined by a disulfide. A helical membrane pass occupies residues 209–229 (VQMGHRAAALLLFAWIIAAAV). His213 lines the heme b pocket. Residues 230-242 (HAARQYKNQKRIY) lie on the Cytoplasmic side of the membrane. A helical transmembrane segment spans residues 243–263 (WGWMISLILIILQAASGIAVV). At 264 to 272 (YSRLDLGFA) the chain is on the extracellular side. The chain crosses the membrane as a helical span at residues 273–293 (LAHAFFISCLFGILCYFLLLV). His275 is a binding site for heme b. The Cytoplasmic portion of the chain corresponds to 294-302 (ARYRRQVQK).

The protein belongs to the COX15/CtaA family. Type 1 subfamily. In terms of assembly, interacts with CtaB. It depends on heme b as a cofactor.

Its subcellular location is the cell membrane. The catalysed reaction is Fe(II)-heme o + 2 A + H2O = Fe(II)-heme a + 2 AH2. Its pathway is porphyrin-containing compound metabolism; heme A biosynthesis; heme A from heme O: step 1/1. Its function is as follows. Catalyzes the conversion of heme O to heme A by two successive hydroxylations of the methyl group at C8. The first hydroxylation forms heme I, the second hydroxylation results in an unstable dihydroxymethyl group, which spontaneously dehydrates, resulting in the formyl group of heme A. In Bacillus licheniformis (strain ATCC 14580 / DSM 13 / JCM 2505 / CCUG 7422 / NBRC 12200 / NCIMB 9375 / NCTC 10341 / NRRL NRS-1264 / Gibson 46), this protein is Heme A synthase.